Consider the following 298-residue polypeptide: tRNA dimethylallyltransferase (298 aa).

Residue 16–23 coordinates ATP; that stretch reads GPTASGKS. 18-23 is a substrate binding site; it reads TASGKS. Interaction with substrate tRNA regions lie at residues 41–44 and 165–169; these read DSMQ and QRIVR.

Belongs to the IPP transferase family. As to quaternary structure, monomer. Mg(2+) is required as a cofactor.

The catalysed reaction is adenosine(37) in tRNA + dimethylallyl diphosphate = N(6)-dimethylallyladenosine(37) in tRNA + diphosphate. Its function is as follows. Catalyzes the transfer of a dimethylallyl group onto the adenine at position 37 in tRNAs that read codons beginning with uridine, leading to the formation of N6-(dimethylallyl)adenosine (i(6)A). The sequence is that of tRNA dimethylallyltransferase from Rhizobium radiobacter (Agrobacterium tumefaciens).